The sequence spans 698 residues: Polyribonucleotide nucleotidyltransferase (698 aa).

Residues Asp-490 and Asp-496 each coordinate Mg(2+). Residues 557–616 enclose the KH domain; it reads PKVVTMTIKPDKIRDVIGPGGKKINEIIDETGVKLDIEQDGTIFIGAVDQAMINRAREII. The S1 motif domain maps to 626-694; it reads GQTYQATVKR…KQGRVNASHR (69 aa).

This sequence belongs to the polyribonucleotide nucleotidyltransferase family. It depends on Mg(2+) as a cofactor.

It is found in the cytoplasm. It carries out the reaction RNA(n+1) + phosphate = RNA(n) + a ribonucleoside 5'-diphosphate. Functionally, involved in mRNA degradation. Catalyzes the phosphorolysis of single-stranded polyribonucleotides processively in the 3'- to 5'-direction. The polypeptide is Polyribonucleotide nucleotidyltransferase (Staphylococcus aureus (strain MRSA252)).